A 118-amino-acid polypeptide reads, in one-letter code: MICOS complex subunit MIC13 (118 aa).

Residues 1-7 are Mitochondrial matrix-facing; the sequence is MVARVWS. Residues 8 to 26 form a helical membrane-spanning segment; sequence LMRFLIKGSVAGGAVYLVY. Residues 27–118 lie on the Mitochondrial intermembrane side of the membrane; the sequence is DQELLGPSDK…GWEYVKARTK (92 aa).

Belongs to the MICOS complex subunit Mic13 family. Component of the mitochondrial contact site and cristae organizing system (MICOS) complex, composed of at least MICOS10/MIC10, CHCHD3/MIC19, CHCHD6/MIC25, APOO/MIC26, MICOS13/MIC13, APOOL/MIC27 and IMMT/MIC60. The MICOS complex associates with mitochondrial outer membrane proteins SAMM50, MTX1 and MTX2 (together described as components of the mitochondrial outer membrane sorting assembly machinery (SAM) complex) and DNAJC11, mitochondrial inner membrane protein TMEM11 and with HSPA9. The MICOS and SAM complexes together with DNAJC11 are part of a large protein complex spanning both membranes termed the mitochondrial intermembrane space bridging (MIB) complex.

It is found in the mitochondrion inner membrane. Component of the MICOS complex, a large protein complex of the mitochondrial inner membrane that plays crucial roles in the maintenance of crista junctions, inner membrane architecture, and formation of contact sites to the outer membrane. Constituent of mature MICOS complex, it is required for the formation of cristae junction (CJ) and maintenance of cristae morphology. Required for the incorporation of MICOS10/MIC10 into the MICOS complex. This is MICOS complex subunit MIC13 from Homo sapiens (Human).